The chain runs to 328 residues: L-tyrosine isonitrile synthase (328 aa).

The protein belongs to the isocyanide synthase family. As to quaternary structure, monomer in solution.

It catalyses the reaction D-ribulose 5-phosphate + L-tyrosine = (2S)-3-(4-hydroxyphenyl)-2-isocyanopropanoate + hydroxyacetone + formaldehyde + phosphate + H2O + H(+). Involved in the biosynthesis of paerucumarin, a cyclized isocyano derivative of tyrosine. Responsible for the synthesis of the isonitrile group on tyrosine using the C2 of ribulose 5-phosphate as the source of the carbon atom. The polypeptide is L-tyrosine isonitrile synthase (Pseudomonas aeruginosa (strain ATCC 15692 / DSM 22644 / CIP 104116 / JCM 14847 / LMG 12228 / 1C / PRS 101 / PAO1)).